The following is a 58-amino-acid chain: Large ribosomal subunit protein bL32 (58 aa).

Residues 1 to 20 (MALPKHKKSKSKRDKRRTHQ) are compositionally biased toward basic residues. The disordered stretch occupies residues 1–26 (MALPKHKKSKSKRDKRRTHQKLTAPN).

It belongs to the bacterial ribosomal protein bL32 family.

The chain is Large ribosomal subunit protein bL32 from Desulfatibacillum aliphaticivorans.